The primary structure comprises 348 residues: Putative S-adenosyl-L-methionine-dependent methyltransferase MRA_3439 (348 aa).

Residues Asp-171 and Asp-200–Leu-201 each bind S-adenosyl-L-methionine.

The protein belongs to the UPF0677 family.

Exhibits S-adenosyl-L-methionine-dependent methyltransferase activity. In Mycobacterium tuberculosis (strain ATCC 25177 / H37Ra), this protein is Putative S-adenosyl-L-methionine-dependent methyltransferase MRA_3439.